The following is a 332-amino-acid chain: Ribosomal RNA small subunit methyltransferase C (332 aa).

This sequence belongs to the methyltransferase superfamily. RsmC family. As to quaternary structure, monomer.

Its subcellular location is the cytoplasm. It carries out the reaction guanosine(1207) in 16S rRNA + S-adenosyl-L-methionine = N(2)-methylguanosine(1207) in 16S rRNA + S-adenosyl-L-homocysteine + H(+). Functionally, specifically methylates the guanine in position 1207 of 16S rRNA in the 30S particle. This Pseudomonas entomophila (strain L48) protein is Ribosomal RNA small subunit methyltransferase C.